Reading from the N-terminus, the 62-residue chain is MVQLTRENRSKFVKVKCPDCENEQTIFDRACTPVDCIVCGSNLATPTGGKAQIKAEIITAFE.

Zn(2+)-binding residues include Cys17, Cys20, Cys36, and Cys39. The C4-type zinc-finger motif lies at 17-39 (CPDCENEQTIFDRACTPVDCIVC).

It belongs to the eukaryotic ribosomal protein eS27 family. Part of the 30S ribosomal subunit. Zn(2+) serves as cofactor.

This chain is Small ribosomal subunit protein eS27, found in Methanospirillum hungatei JF-1 (strain ATCC 27890 / DSM 864 / NBRC 100397 / JF-1).